Here is a 420-residue protein sequence, read N- to C-terminus: Transcription termination factor Rho (420 aa).

Positions 49–124 (DIFGGGVLEI…LKVDQVNDDK (76 aa)) constitute a Rho RNA-BD domain. ATP-binding positions include 170-175 (GKGQRG), 182-187 (KAGKTM), and Arg-213.

This sequence belongs to the Rho family. Homohexamer. The homohexamer assembles into an open ring structure.

Functionally, facilitates transcription termination by a mechanism that involves Rho binding to the nascent RNA, activation of Rho's RNA-dependent ATPase activity, and release of the mRNA from the DNA template. This Haemophilus influenzae (strain ATCC 51907 / DSM 11121 / KW20 / Rd) protein is Transcription termination factor Rho.